Consider the following 210-residue polypeptide: MKGKFIVIEGLEGAGKSTAVNTVQQFLRHFKIQDVICTREPGGTALSEEIRHLIKKKSQNEEILTDKAELLLLYAARVQLLENIIKPALSSGTWVIGDRHDLSSQAYQGGGRGIKSEFIKSLADFTLGSSFRPDLTLYLDLPPELGLQRARKRGHLDRIEQQSLVFFERIRARYLELTYDDPRIKMIDASKPIKKVTVDIQNALLSLLEK.

10-17 contacts ATP; that stretch reads GLEGAGKS.

This sequence belongs to the thymidylate kinase family.

The catalysed reaction is dTMP + ATP = dTDP + ADP. In terms of biological role, phosphorylation of dTMP to form dTDP in both de novo and salvage pathways of dTTP synthesis. This chain is Thymidylate kinase, found in Hamiltonella defensa subsp. Acyrthosiphon pisum (strain 5AT).